Consider the following 610-residue polypeptide: Autophagy-related protein 22-1 (610 aa).

The interval methionine 1–proline 29 is disordered. The helical transmembrane segment at tyrosine 41 to leucine 61 threads the bilayer. Asparagine 90 carries N-linked (GlcNAc...) asparagine glycosylation. Transmembrane regions (helical) follow at residues serine 120–phenylalanine 140, leucine 153–proline 173, and isoleucine 177–leucine 197. The tract at residues lysine 216–asparagine 242 is disordered. Over residues glycine 229–arginine 239 the composition is skewed to polar residues. Helical transmembrane passes span glycine 277–phenylalanine 297, threonine 310–valine 330, valine 379–threonine 399, and valine 415–valine 435. The N-linked (GlcNAc...) asparagine glycan is linked to asparagine 445. The next 4 helical transmembrane spans lie at leucine 450–valine 470, phenylalanine 485–glycine 507, lysine 527–valine 547, and glycine 550–alanine 570. The tract at residues lysine 586–proline 610 is disordered. Asparagine 591 carries an N-linked (GlcNAc...) asparagine glycan.

Belongs to the ATG22 family.

It is found in the vacuole membrane. Its function is as follows. Vacuolar effluxer which mediate the efflux of amino acids resulting from autophagic degradation. The release of autophagic amino acids allows the maintenance of protein synthesis and viability during nitrogen starvation. The polypeptide is Autophagy-related protein 22-1 (atg22-1) (Aspergillus clavatus (strain ATCC 1007 / CBS 513.65 / DSM 816 / NCTC 3887 / NRRL 1 / QM 1276 / 107)).